The following is a 73-amino-acid chain: Putative antitoxin VapB18 (73 aa).

It belongs to the UPF0330 family.

Possibly the antitoxin component of a type II toxin-antitoxin (TA) system. Its cognate toxin is VapC18 (Potential). The protein is Putative antitoxin VapB18 (vapB18) of Archaeoglobus fulgidus (strain ATCC 49558 / DSM 4304 / JCM 9628 / NBRC 100126 / VC-16).